The chain runs to 54 residues: UPF0434 protein BCI_0256 (54 aa).

The protein belongs to the UPF0434 family.

This chain is UPF0434 protein BCI_0256, found in Baumannia cicadellinicola subsp. Homalodisca coagulata.